The sequence spans 423 residues: 3-phosphoshikimate 1-carboxyvinyltransferase (423 aa).

3-phosphoshikimate-binding residues include lysine 21, serine 22, and arginine 26. Lysine 21 is a phosphoenolpyruvate binding site. The phosphoenolpyruvate site is built by glycine 92 and arginine 120. 3-phosphoshikimate-binding residues include serine 166, glutamine 168, serine 194, aspartate 310, and lysine 337. Glutamine 168 contributes to the phosphoenolpyruvate binding site. Aspartate 310 (proton acceptor) is an active-site residue. Arginine 341, arginine 384, and lysine 409 together coordinate phosphoenolpyruvate.

It belongs to the EPSP synthase family. Monomer.

The protein resides in the cytoplasm. It carries out the reaction 3-phosphoshikimate + phosphoenolpyruvate = 5-O-(1-carboxyvinyl)-3-phosphoshikimate + phosphate. The protein operates within metabolic intermediate biosynthesis; chorismate biosynthesis; chorismate from D-erythrose 4-phosphate and phosphoenolpyruvate: step 6/7. Its function is as follows. Catalyzes the transfer of the enolpyruvyl moiety of phosphoenolpyruvate (PEP) to the 5-hydroxyl of shikimate-3-phosphate (S3P) to produce enolpyruvyl shikimate-3-phosphate and inorganic phosphate. This is 3-phosphoshikimate 1-carboxyvinyltransferase from Syntrophobacter fumaroxidans (strain DSM 10017 / MPOB).